The following is a 149-amino-acid chain: UPF0336 protein Lxx02810 (149 aa).

This sequence belongs to the UPF0336 family.

This Leifsonia xyli subsp. xyli (strain CTCB07) protein is UPF0336 protein Lxx02810.